A 512-amino-acid polypeptide reads, in one-letter code: Tyrosine-protein kinase Lyn (512 aa).

A disordered region spans residues 1 to 45 (MGCIKSKRKDNLNDDEVDSKTQPVRNTDRTIYVRDPTSNKQQRPV). The N-myristoyl glycine moiety is linked to residue G2. C3 is lipidated: S-palmitoyl cysteine. S19 is subject to Phosphoserine. Residues 63 to 123 (EQGDIVVALY…PSNYVAKVNT (61 aa)) enclose the SH3 domain. The 98-residue stretch at 129–226 (WFFKDITRKD…GLCRRLEKAC (98 aa)) folds into the SH2 domain. Phosphotyrosine is present on Y193. At S228 the chain carries Phosphoserine. Residues 247–501 (IKLVKKLGAG…YLQSVLDDFY (255 aa)) form the Protein kinase domain. Residues 253–261 (LGAGQFGEV) and K275 contribute to the ATP site. Phosphotyrosine is present on residues Y306 and Y316. Catalysis depends on D367, which acts as the Proton acceptor. Residue Y397 is modified to Phosphotyrosine; by autocatalysis. Y460 and Y473 each carry phosphotyrosine. Y508 bears the Phosphotyrosine; by autocatalysis, CSK and MATK mark.

It belongs to the protein kinase superfamily. Tyr protein kinase family. SRC subfamily. As to quaternary structure, interacts with TEC. Interacts (via SH2 domain) with FLT3 (tyrosine phosphorylated). Interacts with LIME1 and with CD79A upon activation of the B-cell antigen receptor. Interacts with the B-cell receptor complex. Interacts with phosphorylated THEMIS2. Interacts with EPOR. Interacts with MS4A2/FCER1B. Interaction (via the SH2 and SH3 domains) with MUC1 is stimulated by IL7 and the subsequent phosphorylation increases the binding between MUC1 and CTNNB1/beta-catenin. Interacts with ADAM15. Interacts with NDFIP2 and more weakly with NDFIP1. Interacts with FASLG. Interacts with KIT. Interacts with HCLS1. Interacts with FCGR2B. Interacts with FCGR1A; the interaction may be indirect. Interacts with CD19, CD22, CD79A and CD79B. Interacts (via SH3 domain) with CBLC, PPP1R15A and PDE4A. Interacts with TGFB1I1. Interacts (via SH3 domain) with PIK3R1, the regulatory subunit of phosphatidylinositol 3-kinase; this interaction enhances phosphatidylinositol 3-kinase activity. Interacts with CSF2RB, the common subunit of the IL3, IL5 and CSF2 receptors. Interacts with PAG1; identified in a complex with PAG1 and STAT3. Interacts with ABL1. Interacts with PTPN6/SHP-1. Interacts (via SH3 domain) with SCIMP (via proline-rich region). This interaction facilitates the phosphorylation of SCIMP on 'Tyr-96', which enhances binding of SCIMP to TLR4, and consequently the phosphorylation of TLR4 in response to stimulation by lipopolysaccharide in macrophages. Interacts with LPXN (via LD motif 3) and the interaction is induced upon B-cell antigen receptor (BCR) activation. Interacts (via SH3-domain) with ANKRD54 (via ankyrin repeat region) in an activation-independent status of LYN. Forms a multiprotein complex with ANKRD54 and HCLS1. Interacts (via SH2 and SH3 domains) with UNC119; leading to LYN activation. Interacts with CD36. Interacts with LYN. Interacts with SKAP1 and FYB1; this interaction promotes the phosphorylation of CLNK. Interacts with BCAR1/CAS and NEDD9/HEF1. Post-translationally, ubiquitinated by CBL, leading to its degradation. In terms of processing, autophosphorylated. Phosphorylated on tyrosine residues in response to KIT signaling. Phosphorylation at Tyr-397 is required for optimal activity. Phosphorylation at Tyr-508 inhibits kinase activity. Phosphorylated at Tyr-508 by CSK. Dephosphorylated by PTPRC/CD45. Becomes rapidly phosphorylated upon activation of the B-cell receptor and the immunoglobulin receptor FCGR1A. Phosphorylated in response to ITGB1 in B-cells. As to expression, detected in bone marrow-derived monocytes and macrophages (at protein level). Expressed predominantly in B-lymphoid and myeloid cells.

The protein resides in the cell membrane. It localises to the nucleus. It is found in the cytoplasm. Its subcellular location is the perinuclear region. The protein localises to the golgi apparatus. The protein resides in the membrane. It catalyses the reaction L-tyrosyl-[protein] + ATP = O-phospho-L-tyrosyl-[protein] + ADP + H(+). Its activity is regulated as follows. Subject to autoinhibition, mediated by intramolecular interactions between the SH2 domain and the C-terminal phosphotyrosine. Phosphorylation at Tyr-397 is required for optimal activity. Phosphorylated by CSK at Tyr-508; phosphorylation at Tyr-508 inhibits kinase activity. Kinase activity is modulated by dephosphorylation by PTPRC/CD45. Inhibited by dasatinib, PP2, and SU6656. In terms of biological role, non-receptor tyrosine-protein kinase that transmits signals from cell surface receptors and plays an important role in the regulation of innate and adaptive immune responses, hematopoiesis, responses to growth factors and cytokines, integrin signaling, but also responses to DNA damage and genotoxic agents. Functions primarily as negative regulator, but can also function as activator, depending on the context. Required for the initiation of the B-cell response, but also for its down-regulation and termination. Plays an important role in the regulation of B-cell differentiation, proliferation, survival and apoptosis, and is important for immune self-tolerance. Acts downstream of several immune receptors, including the B-cell receptor, CD79A, CD79B, CD5, CD19, CD22, FCER1, FCGR2, FCGR1A, TLR2 and TLR4. Plays a role in the inflammatory response to bacterial lipopolysaccharide. Mediates the responses to cytokines and growth factors in hematopoietic progenitors, platelets, erythrocytes, and in mature myeloid cells, such as dendritic cells, neutrophils and eosinophils. Acts downstream of EPOR, KIT, MPL, the chemokine receptor CXCR4, as well as the receptors for IL3, IL5 and CSF2. Plays an important role in integrin signaling. Regulates cell proliferation, survival, differentiation, migration, adhesion, degranulation, and cytokine release. Involved in the regulation of endothelial activation, neutrophil adhesion and transendothelial migration. Down-regulates signaling pathways by phosphorylation of immunoreceptor tyrosine-based inhibitory motifs (ITIM), that then serve as binding sites for phosphatases, such as PTPN6/SHP-1, PTPN11/SHP-2 and INPP5D/SHIP-1, that modulate signaling by dephosphorylation of kinases and their substrates. Phosphorylates LIME1 in response to CD22 activation. Phosphorylates BTK, CBL, CD5, CD19, CD72, CD79A, CD79B, CSF2RB, DOK1, HCLS1, MS4A2/FCER1B, SYK and TEC. Phosphorylates PIRB at Tyr-794 and Tyr-824, which is required for PIRB interaction with PTPN6/SHP-1 and PTPN11/SHP-2. Promotes phosphorylation of SIRPA, PTPN6/SHP-1, PTPN11/SHP-2 and INPP5D/SHIP-1. Required for rapid phosphorylation of FER in response to FCER1 activation. Mediates KIT phosphorylation. Acts as an effector of EPOR (erythropoietin receptor) in controlling KIT expression and may play a role in erythroid differentiation during the switch between proliferation and maturation. Depending on the context, activates or inhibits several signaling cascades. Regulates phosphatidylinositol 3-kinase activity and AKT1 activation. Regulates activation of the MAP kinase signaling cascade, including activation of MAP2K1/MEK1, MAPK1/ERK2, MAPK3/ERK1, MAPK8/JNK1 and MAPK9/JNK2. Mediates activation of STAT5A and/or STAT5B. Phosphorylates LPXN on 'Tyr-72'. Kinase activity facilitates TLR4-TLR6 heterodimerization and signal initiation. Phosphorylates SCIMP on 'Tyr-96'; this enhances binding of SCIMP to TLR4, promoting the phosphorylation of TLR4, and a selective cytokine response to lipopolysaccharide in macrophages. Phosphorylates CLNK. Phosphorylates BCAR1/CAS and NEDD9/HEF1. The polypeptide is Tyrosine-protein kinase Lyn (Lyn) (Mus musculus (Mouse)).